The sequence spans 259 residues: Deoxyribose-phosphate aldolase (259 aa).

Residue Asp102 is the Proton donor/acceptor of the active site. Lys167 serves as the catalytic Schiff-base intermediate with acetaldehyde. The Proton donor/acceptor role is filled by Lys201.

The protein belongs to the DeoC/FbaB aldolase family. DeoC type 2 subfamily.

It localises to the cytoplasm. It carries out the reaction 2-deoxy-D-ribose 5-phosphate = D-glyceraldehyde 3-phosphate + acetaldehyde. It participates in carbohydrate degradation; 2-deoxy-D-ribose 1-phosphate degradation; D-glyceraldehyde 3-phosphate and acetaldehyde from 2-deoxy-alpha-D-ribose 1-phosphate: step 2/2. Functionally, catalyzes a reversible aldol reaction between acetaldehyde and D-glyceraldehyde 3-phosphate to generate 2-deoxy-D-ribose 5-phosphate. This Shigella flexneri protein is Deoxyribose-phosphate aldolase.